The sequence spans 55 residues: Accessory gland-specific peptide 70A (55 aa).

Residues 1–19 (MKTLSLFLVLVCLLGLVQS) form the signal peptide. A hydroxyproline mark is found at Pro28, Pro32, Pro34, and Pro38. A disulfide bridge links Cys43 with Cys55.

Main cells of the accessory glands of males (paragonial gland).

The protein resides in the secreted. Functionally, represses female sexual receptivity and stimulates oviposition. This Drosophila mauritiana (Fruit fly) protein is Accessory gland-specific peptide 70A (Acp70A).